We begin with the raw amino-acid sequence, 224 residues long: Elongation factor 1-beta (224 aa).

It belongs to the EF-1-beta/EF-1-delta family. In terms of assembly, EF-1 is composed of 4 subunits: alpha, beta (1B-alpha=beta'), delta (1B-beta), and gamma (1B-gamma).

EF-1-beta and EF-1-beta' stimulate the exchange of GDP bound to EF-1-alpha to GTP. The chain is Elongation factor 1-beta from Oryza sativa subsp. japonica (Rice).